A 320-amino-acid polypeptide reads, in one-letter code: ATP-dependent 6-phosphofructokinase (320 aa).

ATP is bound at residue G11. R21–K25 contacts ADP. Residues R72–F73 and G102–S105 each bind ATP. Residue D103 participates in Mg(2+) binding. T125–D127 provides a ligand contact to substrate. The active-site Proton acceptor is the D127. An ADP-binding site is contributed by R154. Residues R162 and M169–R171 contribute to the substrate site. ADP contacts are provided by residues G185 to D187 and K213 to H215. Residues E222, R243, and H249 to R252 contribute to the substrate site.

This sequence belongs to the phosphofructokinase type A (PFKA) family. ATP-dependent PFK group I subfamily. Prokaryotic clade 'B1' sub-subfamily. In terms of assembly, homotetramer. Mg(2+) serves as cofactor.

It is found in the cytoplasm. It catalyses the reaction beta-D-fructose 6-phosphate + ATP = beta-D-fructose 1,6-bisphosphate + ADP + H(+). It participates in carbohydrate degradation; glycolysis; D-glyceraldehyde 3-phosphate and glycerone phosphate from D-glucose: step 3/4. With respect to regulation, allosterically activated by ADP and other diphosphonucleosides, and allosterically inhibited by phosphoenolpyruvate. Its function is as follows. Catalyzes the phosphorylation of D-fructose 6-phosphate to fructose 1,6-bisphosphate by ATP, the first committing step of glycolysis. In Lactobacillus helveticus (strain DPC 4571), this protein is ATP-dependent 6-phosphofructokinase.